The following is a 388-amino-acid chain: Sulfate adenylyltransferase (388 aa).

It belongs to the sulfate adenylyltransferase family.

It catalyses the reaction sulfate + ATP + H(+) = adenosine 5'-phosphosulfate + diphosphate. It participates in sulfur metabolism; hydrogen sulfide biosynthesis; sulfite from sulfate: step 1/3. In Trichodesmium erythraeum (strain IMS101), this protein is Sulfate adenylyltransferase.